The sequence spans 389 residues: Chalcone synthase 1 (389 aa).

Cys164 is an active-site residue.

It belongs to the thiolase-like superfamily. Chalcone/stilbene synthases family.

The catalysed reaction is (E)-4-coumaroyl-CoA + 3 malonyl-CoA + 3 H(+) = 2',4,4',6'-tetrahydroxychalcone + 3 CO2 + 4 CoA. It participates in secondary metabolite biosynthesis; flavonoid biosynthesis. In terms of biological role, the primary product of this enzyme is 4,2',4',6'-tetrahydroxychalcone (also termed naringenin-chalcone or chalcone) which can under specific conditions spontaneously isomerize into naringenin. This is Chalcone synthase 1 (CHS1) from Camellia sinensis (Tea plant).